The sequence spans 322 residues: uncharacterized protein (322 aa).

Residues 277–322 (LVTYGGKDGPSDNEDGPSDDEDGPSDDEEGLSKDGVSEYYQSDLDD) are disordered. Residues 287–305 (SDNEDGPSDDEDGPSDDEE) show a composition bias toward acidic residues.

This is an uncharacterized protein from Frog virus 3 (isolate Goorha) (FV-3).